A 322-amino-acid polypeptide reads, in one-letter code: RNA-binding motif protein, X-linked 2 (322 aa).

A Glycyl lysine isopeptide (Lys-Gly) (interchain with G-Cter in SUMO2) cross-link involves residue Lys8. In terms of domain architecture, RRM spans 36–114 (AWIFLGGLPY…RTIRVDHVSN (79 aa)). The disordered stretch occupies residues 134–322 (KGCGARTPSP…SSNPSDRWRH (189 aa)). A Phosphothreonine modification is found at Thr140. Residue Ser149 is modified to Phosphoserine. Residues 155–171 (TKKHKKDKKEKKKKKKE) show a composition bias toward basic residues. 2 positions are modified to phosphoserine: Ser186 and Ser188. Residues 195-223 (KEKDDTGPKKHSSKNSERAQKSEPREGQK) are compositionally biased toward basic and acidic residues. Ser232 carries the phosphoserine modification. A compositionally biased stretch (basic and acidic residues) spans 240–274 (RELKKEKPKHEHKSSSRREAREEKTRIRDRGRSSD). Lys243 participates in a covalent cross-link: Glycyl lysine isopeptide (Lys-Gly) (interchain with G-Cter in SUMO2). Position 272 is a phosphoserine (Ser272). The span at 289–308 (YRSRSRSRDKSHRHKRARRS) shows a compositional bias: basic residues. At Ser314 the chain carries Phosphoserine.

The protein belongs to the IST3 family. As to quaternary structure, part of the activated spliceosome B/catalytic step 1 spliceosome, one of the forms of the spliceosome which has a well-formed active site but still cannot catalyze the branching reaction and is composed of at least 52 proteins, the U2, U5 and U6 snRNAs and the pre-mRNA. Component of the minor spliceosome, which splices U12-type introns.

It localises to the nucleus. Its function is as follows. Involved in pre-mRNA splicing as component of the activated spliceosome. As a component of the minor spliceosome, involved in the splicing of U12-type introns in pre-mRNAs. In Homo sapiens (Human), this protein is RNA-binding motif protein, X-linked 2 (RBMX2).